Here is a 361-residue protein sequence, read N- to C-terminus: MLYNLLLPHVHNSHIANLFHYITFRSGLAIIITLSLSFITGPILIKFLRSLQKNGQPIRSDGPESHQTKVGTPTMGGIMIILSSCLSTLLLADLTNKYIWITLFGFISFGIIGFMDDYAKVTKNNHYGVRGKSKLLLQGIISFIICVLLEYLDKSPSHLLNVPFFKNLSLDLGYFYIVFAMFVIVGSSNAVNLTDGLDGLATVPIAFTAGSFALISYLVGNLIYSNYLQLTYIPNTGELTVLCAGLVGSCLGFLWFNAQPAEVFMGDTGSLSLGGVLGIISVITKHEIVLAIVGGLFVIETTSVILQVYYFKATKGKRIFKMAPLHHHFEKHGWAESKVVIRFWIISVIFALIGLSSLKLR.

Transmembrane regions (helical) follow at residues Leu-28 to Leu-48, Thr-74 to Leu-94, Ile-99 to Ala-119, Ser-133 to Asp-153, Leu-168 to Ser-188, Val-203 to Ile-223, Thr-236 to Phe-256, Val-263 to Ile-283, Ile-288 to Val-308, and Lys-338 to Leu-358.

This sequence belongs to the glycosyltransferase 4 family. MraY subfamily. Requires Mg(2+) as cofactor.

Its subcellular location is the cell membrane. The catalysed reaction is UDP-N-acetyl-alpha-D-muramoyl-L-alanyl-gamma-D-glutamyl-meso-2,6-diaminopimeloyl-D-alanyl-D-alanine + di-trans,octa-cis-undecaprenyl phosphate = di-trans,octa-cis-undecaprenyl diphospho-N-acetyl-alpha-D-muramoyl-L-alanyl-D-glutamyl-meso-2,6-diaminopimeloyl-D-alanyl-D-alanine + UMP. It functions in the pathway cell wall biogenesis; peptidoglycan biosynthesis. Catalyzes the initial step of the lipid cycle reactions in the biosynthesis of the cell wall peptidoglycan: transfers peptidoglycan precursor phospho-MurNAc-pentapeptide from UDP-MurNAc-pentapeptide onto the lipid carrier undecaprenyl phosphate, yielding undecaprenyl-pyrophosphoryl-MurNAc-pentapeptide, known as lipid I. The sequence is that of Phospho-N-acetylmuramoyl-pentapeptide-transferase from Rickettsia montanensis.